An 831-amino-acid chain; its full sequence is Leucine--tRNA ligase (831 aa).

The 'HIGH' region signature appears at 35-45 (PYPSGKIHVGH). Residues 600–604 (KMSKS) carry the 'KMSKS' region motif. K603 is a binding site for ATP.

The protein belongs to the class-I aminoacyl-tRNA synthetase family.

The protein localises to the cytoplasm. It carries out the reaction tRNA(Leu) + L-leucine + ATP = L-leucyl-tRNA(Leu) + AMP + diphosphate. The polypeptide is Leucine--tRNA ligase (Rickettsia bellii (strain RML369-C)).